The chain runs to 869 residues: Ubiquitin carboxyl-terminal hydrolase 29 (869 aa).

Composition is skewed to polar residues over residues 104–120 and 140–150; these read SSTP…MSSQ and SLNTTPESGTP. The disordered stretch occupies residues 104–226; sequence SSTPCESQQP…KAVTLREQEK (123 aa). Positions 187–200 are enriched in basic and acidic residues; that stretch reads VNKDIPKENTPDQK. Residues 201–212 show a composition bias toward basic residues; that stretch reads KKSRRYYSRNRG. A compositionally biased stretch (basic and acidic residues) spans 213-226; sequence GKAEKAVTLREQEK. In terms of domain architecture, USP spans 289 to 826; the sequence is EGFPNLGNTC…SGYIFFYMHN (538 aa). The active-site Nucleophile is cysteine 298. The interval 723 to 754 is disordered; that stretch reads SQEDPEKDLSRSPELQEDDPHSFAFGSDDSKD. Histidine 781 acts as the Proton acceptor in catalysis.

Belongs to the peptidase C19 family. In terms of tissue distribution, predominantly expressed in brain and testis. Highest expression levels in adult brain, especially in the cerebral cortex and hippocampus, and in the forebrain, face, and limb buds of midgestation mouse embryos.

It localises to the cytoplasm. The protein localises to the perinuclear region. The catalysed reaction is Thiol-dependent hydrolysis of ester, thioester, amide, peptide and isopeptide bonds formed by the C-terminal Gly of ubiquitin (a 76-residue protein attached to proteins as an intracellular targeting signal).. Functionally, deubiquitinase involved in innate antiviral immunity by mediating 'Lys-48'-linked deubiquitination of CGAS, thereby promoting its stabilization. The chain is Ubiquitin carboxyl-terminal hydrolase 29 from Mus musculus (Mouse).